We begin with the raw amino-acid sequence, 187 residues long: UPF0301 protein CKO_04323 (187 aa).

The protein belongs to the UPF0301 (AlgH) family.

The protein is UPF0301 protein CKO_04323 of Citrobacter koseri (strain ATCC BAA-895 / CDC 4225-83 / SGSC4696).